The chain runs to 415 residues: Homoserine O-acetyltransferase (415 aa).

Residues 47 to 369 (NAVLVCHGLT…HGHDAFLVEP (323 aa)) form the AB hydrolase-1 domain. Residue Ser-155 is the Nucleophile of the active site. Arg-226 is a substrate binding site. Active-site residues include Asp-329 and His-362. Asp-363 serves as a coordination point for substrate. The tract at residues 383–415 (GVAGRAVTDTAPDGGEPDEDEDFAPVHSSLFSR) is disordered.

It belongs to the AB hydrolase superfamily. MetX family. Homodimer.

It is found in the cytoplasm. It catalyses the reaction L-homoserine + acetyl-CoA = O-acetyl-L-homoserine + CoA. The protein operates within amino-acid biosynthesis; L-methionine biosynthesis via de novo pathway; O-acetyl-L-homoserine from L-homoserine: step 1/1. In terms of biological role, transfers an acetyl group from acetyl-CoA to L-homoserine, forming acetyl-L-homoserine. This chain is Homoserine O-acetyltransferase, found in Haloferax volcanii (strain ATCC 29605 / DSM 3757 / JCM 8879 / NBRC 14742 / NCIMB 2012 / VKM B-1768 / DS2) (Halobacterium volcanii).